The following is a 115-amino-acid chain: Aspartate 1-decarboxylase (115 aa).

The active-site Schiff-base intermediate with substrate; via pyruvic acid is Ser25. Residue Ser25 is modified to Pyruvic acid (Ser). Residue Thr57 participates in substrate binding. Tyr58 acts as the Proton donor in catalysis. Residue 73 to 75 (GAA) coordinates substrate.

This sequence belongs to the PanD family. As to quaternary structure, heterooctamer of four alpha and four beta subunits. The cofactor is pyruvate. In terms of processing, is synthesized initially as an inactive proenzyme, which is activated by self-cleavage at a specific serine bond to produce a beta-subunit with a hydroxyl group at its C-terminus and an alpha-subunit with a pyruvoyl group at its N-terminus.

It localises to the cytoplasm. The enzyme catalyses L-aspartate + H(+) = beta-alanine + CO2. It functions in the pathway cofactor biosynthesis; (R)-pantothenate biosynthesis; beta-alanine from L-aspartate: step 1/1. Functionally, catalyzes the pyruvoyl-dependent decarboxylation of aspartate to produce beta-alanine. In Kosmotoga olearia (strain ATCC BAA-1733 / DSM 21960 / TBF 19.5.1), this protein is Aspartate 1-decarboxylase.